Consider the following 159-residue polypeptide: MKIRIGHGFDVHKFGGEPPLILGGVDVPYEVGLIAHSDGDVALHAISDAILGAMALGDIGKHFPDTDPEFKGADSRVLLRHCYQLATDMGFSLSNLDVTIIAQAPKMAPHIEAIRKVLAADLVADINDINVKATTTEKLGFTGRKEGIAVEAVVLMIKA.

Aspartate 10 and histidine 12 together coordinate a divalent metal cation. Residues aspartate 10–histidine 12 and histidine 36–serine 37 each bind 4-CDP-2-C-methyl-D-erythritol 2-phosphate. An a divalent metal cation-binding site is contributed by histidine 44. 4-CDP-2-C-methyl-D-erythritol 2-phosphate-binding positions include aspartate 58–glycine 60, phenylalanine 63–aspartate 67, alanine 102–alanine 108, threonine 134–glutamate 137, phenylalanine 141, and arginine 144.

The protein belongs to the IspF family. In terms of assembly, homotrimer. Requires a divalent metal cation as cofactor.

The catalysed reaction is 4-CDP-2-C-methyl-D-erythritol 2-phosphate = 2-C-methyl-D-erythritol 2,4-cyclic diphosphate + CMP. It participates in isoprenoid biosynthesis; isopentenyl diphosphate biosynthesis via DXP pathway; isopentenyl diphosphate from 1-deoxy-D-xylulose 5-phosphate: step 4/6. Its function is as follows. Involved in the biosynthesis of isopentenyl diphosphate (IPP) and dimethylallyl diphosphate (DMAPP), two major building blocks of isoprenoid compounds. Catalyzes the conversion of 4-diphosphocytidyl-2-C-methyl-D-erythritol 2-phosphate (CDP-ME2P) to 2-C-methyl-D-erythritol 2,4-cyclodiphosphate (ME-CPP) with a corresponding release of cytidine 5-monophosphate (CMP). This is 2-C-methyl-D-erythritol 2,4-cyclodiphosphate synthase from Shewanella halifaxensis (strain HAW-EB4).